The primary structure comprises 617 residues: MIKSQESLTLEDVAVEFTWEEWQLLGPAQKDLYRDVMLENYSNLVSVGYQASKPDALFKLEQGEPWTVENEIHSQICPEIKKVDNHLQMHSQKQRCLKRVEQCHKHNAFGNIIHQRKSDFPLRQNHDTFDLHGKILKSNLSLVNQNKRYEIKNSVGVNGDGKSFLHAKHEQFHNEMNFPEGGNSVNTNSQFIKHQRTQNIDKPHVCTECGKAFLKKSRLIYHQRVHTGEKPHGCSICGKAFSRKSGLTEHQRNHTGEKPYECTECDKAFRWKSQLNAHQKIHTGEKSYICSDCGKGFIKKSRLINHQRVHTGEKPHGCSLCGKAFSKRSRLTEHQRTHTGEKPYECTECDKAFRWKSQLNAHQKAHTGEKSYICRDCGKGFIQKGNLIVHQRIHTGEKPYICNECGKGFIQKGNLLIHRRTHTGEKPYVCNECGKGFSQKTCLISHQRFHTGKTPFVCTECGKSCSHKSGLINHQRIHTGEKPYTCSDCGKAFRDKSCLNRHRRTHTGERPYGCSDCGKAFSHLSCLVYHKGMLHAREKCVGSVKLENPCSESHSLSHTRDLIQDKDSVNMVTLQMPSVAAQTSLTNSAFQAESKVAIVSQPVARSSVSADSRICTE.

Residues 8 to 78 (LTLEDVAVEF…ENEIHSQICP (71 aa)) form the KRAB domain. 12 consecutive C2H2-type zinc fingers follow at residues 204–226 (HVCT…QRVH), 232–254 (HGCS…QRNH), 260–282 (YECT…QKIH), 288–310 (YICS…QRVH), 316–338 (HGCS…QRTH), 344–366 (YECT…QKAH), 372–394 (YICR…QRIH), 400–422 (YICN…RRTH), 428–450 (YVCN…QRFH), 456–478 (FVCT…QRIH), 484–506 (YTCS…RRTH), and 512–535 (YGCS…GMLH).

It belongs to the krueppel C2H2-type zinc-finger protein family.

The protein resides in the nucleus. May be involved in transcriptional regulation. The polypeptide is Zinc finger protein 613 (ZNF613) (Homo sapiens (Human)).